Consider the following 396-residue polypeptide: CCA-adding enzyme (396 aa).

Positions 27 and 30 each coordinate ATP. Positions 27 and 30 each coordinate CTP. 2 residues coordinate Mg(2+): Asp40 and Asp42. Residues Arg111, Asp154, Arg157, Arg160, and Arg163 each coordinate ATP. CTP is bound by residues Arg111, Asp154, Arg157, Arg160, and Arg163.

It belongs to the tRNA nucleotidyltransferase/poly(A) polymerase family. Bacterial CCA-adding enzyme type 3 subfamily. Homodimer. Mg(2+) serves as cofactor.

It carries out the reaction a tRNA precursor + 2 CTP + ATP = a tRNA with a 3' CCA end + 3 diphosphate. The catalysed reaction is a tRNA with a 3' CCA end + 2 CTP + ATP = a tRNA with a 3' CCACCA end + 3 diphosphate. In terms of biological role, catalyzes the addition and repair of the essential 3'-terminal CCA sequence in tRNAs without using a nucleic acid template. Adds these three nucleotides in the order of C, C, and A to the tRNA nucleotide-73, using CTP and ATP as substrates and producing inorganic pyrophosphate. tRNA 3'-terminal CCA addition is required both for tRNA processing and repair. Also involved in tRNA surveillance by mediating tandem CCA addition to generate a CCACCA at the 3' terminus of unstable tRNAs. While stable tRNAs receive only 3'-terminal CCA, unstable tRNAs are marked with CCACCA and rapidly degraded. In Pediococcus pentosaceus (strain ATCC 25745 / CCUG 21536 / LMG 10740 / 183-1w), this protein is CCA-adding enzyme.